The following is a 311-amino-acid chain: Ketoisovalerate oxidoreductase subunit VorB (311 aa).

As to quaternary structure, heterotetramer of one alpha, one beta, one delta and one gamma chain.

The catalysed reaction is 3-methyl-2-oxobutanoate + 2 oxidized [2Fe-2S]-[ferredoxin] + CoA = 2-methylpropanoyl-CoA + 2 reduced [2Fe-2S]-[ferredoxin] + CO2 + H(+). This is Ketoisovalerate oxidoreductase subunit VorB (vorB) from Pyrococcus abyssi (strain GE5 / Orsay).